Reading from the N-terminus, the 109-residue chain is U4-lycotoxin-Ls1b (109 aa).

A signal peptide spans 1–22 (MKVLVLFSVLFLTLFSYSSTEA). Residues 23 to 44 (IDEFDSDAEDDMLSLMANEQVR) constitute a propeptide that is removed on maturation. Residues 45-88 (AKACTPRLHDCSHDRHSCCRGELSKDVCYCFYPEGEDKTEVCSC) form a knottin domain region. Cystine bridges form between C48–C63, C55–C72, C62–C88, and C74–C86. A linear cationic cytotoxin domain region spans residues 89–108 (QQPKSHKYIEKVVDKAKTVV).

Belongs to the neurotoxin 19 (CSTX) family. 05 (U4-Lctx) subfamily. As to expression, expressed by the venom gland.

The protein resides in the secreted. Enhances the high-affinity desensitization of human P2RX3 purinoceptors. This Lycosa singoriensis (Wolf spider) protein is U4-lycotoxin-Ls1b.